Consider the following 115-residue polypeptide: Large ribosomal subunit protein bL20c (115 aa).

This sequence belongs to the bacterial ribosomal protein bL20 family.

It localises to the plastid. It is found in the chloroplast. Functionally, binds directly to 23S ribosomal RNA and is necessary for the in vitro assembly process of the 50S ribosomal subunit. It is not involved in the protein synthesizing functions of that subunit. This Pyropia yezoensis (Susabi-nori) protein is Large ribosomal subunit protein bL20c.